The primary structure comprises 114 residues: Chaperonin GroEL (114 aa).

Residue 22 to 26 (DGTTT) participates in ATP binding.

Belongs to the chaperonin (HSP60) family. As to quaternary structure, forms a cylinder of 14 subunits composed of two heptameric rings stacked back-to-back. Interacts with the co-chaperonin GroES.

It is found in the cytoplasm. It catalyses the reaction ATP + H2O + a folded polypeptide = ADP + phosphate + an unfolded polypeptide.. Together with its co-chaperonin GroES, plays an essential role in assisting protein folding. The GroEL-GroES system forms a nano-cage that allows encapsulation of the non-native substrate proteins and provides a physical environment optimized to promote and accelerate protein folding. This Mycobacterium ulcerans protein is Chaperonin GroEL.